A 366-amino-acid chain; its full sequence is Spermidine/putrescine import ATP-binding protein PotA (366 aa).

The ABC transporter domain maps to 8–239; it reads IRFENVTKQF…PINKFVADFI (232 aa). 41 to 48 provides a ligand contact to ATP; it reads GPSGCGKT.

It belongs to the ABC transporter superfamily. Spermidine/putrescine importer (TC 3.A.1.11.1) family. In terms of assembly, the complex is composed of two ATP-binding proteins (PotA), two transmembrane proteins (PotB and PotC) and a solute-binding protein (PotD).

The protein resides in the cell membrane. It carries out the reaction ATP + H2O + polyamine-[polyamine-binding protein]Side 1 = ADP + phosphate + polyamineSide 2 + [polyamine-binding protein]Side 1.. In terms of biological role, part of the ABC transporter complex PotABCD involved in spermidine/putrescine import. Responsible for energy coupling to the transport system. This is Spermidine/putrescine import ATP-binding protein PotA from Listeria monocytogenes serotype 4b (strain F2365).